Consider the following 341-residue polypeptide: Heat-inducible transcription repressor HrcA (341 aa).

This sequence belongs to the HrcA family.

Negative regulator of class I heat shock genes (grpE-dnaK-dnaJ and groELS operons). Prevents heat-shock induction of these operons. The polypeptide is Heat-inducible transcription repressor HrcA (Mycobacteroides abscessus (strain ATCC 19977 / DSM 44196 / CCUG 20993 / CIP 104536 / JCM 13569 / NCTC 13031 / TMC 1543 / L948) (Mycobacterium abscessus)).